Reading from the N-terminus, the 220-residue chain is Lipoprotein-releasing system ATP-binding protein LolD (220 aa).

An ABC transporter domain is found at Met1–Ser220. Gly37–Ser44 is an ATP binding site.

Belongs to the ABC transporter superfamily. Lipoprotein translocase (TC 3.A.1.125) family. As to quaternary structure, the complex is composed of two ATP-binding proteins (LolD) and two transmembrane proteins (LolC and LolE).

It localises to the cell inner membrane. Part of the ABC transporter complex LolCDE involved in the translocation of mature outer membrane-directed lipoproteins, from the inner membrane to the periplasmic chaperone, LolA. Responsible for the formation of the LolA-lipoprotein complex in an ATP-dependent manner. This Bdellovibrio bacteriovorus (strain ATCC 15356 / DSM 50701 / NCIMB 9529 / HD100) protein is Lipoprotein-releasing system ATP-binding protein LolD.